The sequence spans 330 residues: MNMDIASFFSGAGGLDLGFTKAGFNIVFANDNWKGCWKTFEKNHGIKINKKPIEWLKPSEIPDVVGFIGGPPCQSWSLAGSMCGADDPRGKTFYAYVDLVKEKDPLFFLAENVPGIVSRTHLPEFKRLVNSFIDIGYNVEYKVLNAKDYGVPQDRKRVFIVGYREDLNLKFEFPKPLNKKVTLRDAIGDLPEPKPALEKNRSNGENLEVPNHEYMTGTFSSRYMSRNRVRSWDEVSFTIQAGGRHAPCHPQANKMIKVGPDKFIFDPESPKPYRRLSVRECARIQGFPDDFIFYYKNVADGYTMVGNAVPVKLAEELAKKIKKDLEGVLN.

Positions 3–328 (MDIASFFSGA…KKIKKDLEGV (326 aa)) constitute an SAM-dependent MTase C5-type domain. Cys73 is a catalytic residue.

This sequence belongs to the class I-like SAM-binding methyltransferase superfamily. C5-methyltransferase family.

It catalyses the reaction a 2'-deoxycytidine in DNA + S-adenosyl-L-methionine = a 5-methyl-2'-deoxycytidine in DNA + S-adenosyl-L-homocysteine + H(+). A methylase that recognizes the double-stranded sequence 5'-GGCC-3', methylates C-3 on both strands, and protects the DNA from cleavage by the MthTI endonuclease. This chain is Type II methyltransferase M.MthTI (mthTIM), found in Methanothermobacter thermautotrophicus (Methanobacterium thermoformicicum).